The following is a 666-amino-acid chain: ATP-dependent zinc metalloprotease FtsH (666 aa).

At 1 to 6 (MKSETG) the chain is on the cytoplasmic side. A helical transmembrane segment spans residues 7 to 27 (YMGFVVVLVFMVLLALQLATL). Residues 28–116 (SAPATQIAYS…TRYRGADDDT (89 aa)) are Periplasmic-facing. A helical membrane pass occupies residues 117 to 137 (WIGTLASWIVPIAVFALVWNL). Over 138 to 666 (MLRRPRGGLQ…ADNADHSVPQ (529 aa)) the chain is Cytoplasmic. Residue 210 to 217 (GAPGTGKT) participates in ATP binding. Residue His432 participates in Zn(2+) binding. Glu433 is a catalytic residue. The Zn(2+) site is built by His436 and Asp509. The segment at 612–666 (NDEPTPEPGARDPGGDAAKRSGIGAAPAKPPAEVGSAELRDPARKADNADHSVPQ) is disordered. 2 stretches are compositionally biased toward basic and acidic residues: residues 620–630 (GARDPGGDAAK) and 649–666 (ELRD…SVPQ).

In the central section; belongs to the AAA ATPase family. It in the C-terminal section; belongs to the peptidase M41 family. As to quaternary structure, homohexamer. Zn(2+) is required as a cofactor.

Its subcellular location is the cell inner membrane. In terms of biological role, acts as a processive, ATP-dependent zinc metallopeptidase for both cytoplasmic and membrane proteins. Plays a role in the quality control of integral membrane proteins. This chain is ATP-dependent zinc metalloprotease FtsH, found in Burkholderia pseudomallei (strain 1710b).